The sequence spans 255 residues: Large ribosomal subunit protein uL4 (255 aa).

The protein belongs to the universal ribosomal protein uL4 family. Part of the 50S ribosomal subunit.

In terms of biological role, one of the primary rRNA binding proteins, this protein initially binds near the 5'-end of the 23S rRNA. It is important during the early stages of 50S assembly. It makes multiple contacts with different domains of the 23S rRNA in the assembled 50S subunit and ribosome. Forms part of the polypeptide exit tunnel. The protein is Large ribosomal subunit protein uL4 of Thermococcus onnurineus (strain NA1).